Here is a 431-residue protein sequence, read N- to C-terminus: Cyclic 2,3-diphosphoglycerate synthetase (431 aa).

Belongs to the cyclic 2,3-diphosphoglycerate synthetase family.

The protein localises to the cytoplasm. It catalyses the reaction (2R)-2,3-bisphosphoglycerate + ATP + H(+) = cyclic (2R)-2,3-bisphosphoglycerate + ADP + phosphate. Functionally, catalyzes the formation of cyclic 2,3-diphosphoglycerate (cDPG) by formation of an intramolecular phosphoanhydride bond at the expense of ATP. The chain is Cyclic 2,3-diphosphoglycerate synthetase from Pyrococcus furiosus (strain ATCC 43587 / DSM 3638 / JCM 8422 / Vc1).